Consider the following 971-residue polypeptide: Protein cwh43 (971 aa).

The interval 1–242 (MTEKTSSLVF…PSSFATRKKE (242 aa)) is PGAP2-like. 19 consecutive transmembrane segments (helical) span residues 15–35 (VALV…ALAL), 71–91 (VFQW…LLWF), 101–121 (VIIT…WVYV), 129–149 (WHDI…ILVS), 161–181 (IRNI…YWYI), 188–208 (IPGA…WDIL), 286–306 (VYLS…VWYF), 313–333 (ISGY…GIPL), 336–356 (KFAS…IAAY), 366–386 (FVTA…FSNI), 397–417 (ISTF…FFSN), 432–452 (QIPA…FHVQ), 467–487 (ITAL…HTFL), 509–529 (YPHG…APYL), 532–552 (SGAF…FMYI), 555–575 (GWCS…YSFA), 588–608 (VWGG…WVVA), 622–642 (TSYI…AYSG), and 673–693 (LLTG…NMPP). Residues 243-971 (KGEHLSYAEA…LVVHEPWYYD (729 aa)) are PGAP2IP-like. The active site involves His826.

It in the N-terminal section; belongs to the PGAP2 family. In the C-terminal section; belongs to the PGAP2IP family.

The protein localises to the cell membrane. It is found in the endoplasmic reticulum membrane. Functionally, involved in the maintenance of cell wall integrity. Required for the replacement of the diacylglycerol moiety by ceramides during GPI-anchor maturation. In Schizosaccharomyces pombe (strain 972 / ATCC 24843) (Fission yeast), this protein is Protein cwh43 (cwh43).